A 205-amino-acid polypeptide reads, in one-letter code: Thymidylate kinase (205 aa).

An ATP-binding site is contributed by 10-17; it reads GIDGAGKS.

This sequence belongs to the thymidylate kinase family.

It carries out the reaction dTMP + ATP = dTDP + ADP. Its function is as follows. Phosphorylation of dTMP to form dTDP in both de novo and salvage pathways of dTTP synthesis. The chain is Thymidylate kinase from Ralstonia nicotianae (strain ATCC BAA-1114 / GMI1000) (Ralstonia solanacearum).